The following is a 221-amino-acid chain: Transmembrane emp24 domain-containing protein 3 (221 aa).

The signal sequence occupies residues 1 to 30 (MGNEVPRASSFQMLMLLLLLLLLRAERLRG). Topologically, residues 31-184 (AELTFELPDN…RAEDLNSRVS (154 aa)) are lumenal. In terms of domain architecture, GOLD spans 42–124 (KQCFHEEVEQ…HKTVYFDFQV (83 aa)). Arg-103 carries the post-translational modification Dimethylated arginine. A helical transmembrane segment spans residues 185–205 (YWSVGETIALFVVSFSQVLLL). The Cytoplasmic portion of the chain corresponds to 206–221 (KSFFTEKRPINRAVHS). The COPII vesicle coat-binding motif lies at 208–209 (FF). Residues 208-221 (FFTEKRPINRAVHS) carry the COPI vesicle coat-binding motif.

Belongs to the EMP24/GP25L family. As to quaternary structure, monomer in endoplasmic reticulum, endoplasmic reticulum-Golgi intermediate compartment and cis-Golgi network. Interacts (via C-terminus) with COPG1; the interaction involves dimeric TMED3; however, there are conflicting reports on the interaction. Interacts with GORASP1 and GORASP2.

It is found in the endoplasmic reticulum-Golgi intermediate compartment membrane. It localises to the golgi apparatus. The protein resides in the cis-Golgi network membrane. The protein localises to the golgi stack membrane. Its subcellular location is the endoplasmic reticulum membrane. It is found in the cytoplasmic vesicle. It localises to the COPI-coated vesicle membrane. In terms of biological role, potential role in vesicular protein trafficking, mainly in the early secretory pathway. Contributes to the coupled localization of TMED2 and TMED10 in the cis-Golgi network. This chain is Transmembrane emp24 domain-containing protein 3 (Tmed3), found in Rattus norvegicus (Rat).